The following is a 431-amino-acid chain: Protein translocase subunit SecY (431 aa).

Residues 1–17 (MFKTISNFMRVSDIRNK) lie on the Cytoplasmic side of the membrane. The chain crosses the membrane as a helical span at residues 18–38 (IIFTLLMLIVFRIGAFIPVPY). Topologically, residues 39-66 (VNAEALQAQSQMGVFDLLNTFGGGALYQ) are extracellular. A helical membrane pass occupies residues 67–87 (FSIFAMGITPYITASIIIQLL). Topologically, residues 88 to 115 (QMDVVPKFTEWSKQGEVGRRKLAQFTRY) are cytoplasmic. A helical transmembrane segment spans residues 116 to 136 (FTIVLGFIQALGMSYGFNNLA). Residues 137 to 145 (NGMLIEKSG) are Extracellular-facing. The helical transmembrane segment at 146-166 (VSTYLIIALVLTGGTAFLMWL) threads the bilayer. Residues 167-177 (GEQITSHGVGN) are Cytoplasmic-facing. Residues 178 to 198 (GISIIIFAGIVSSIPKTIGQI) form a helical membrane-spanning segment. Residues 199 to 213 (YETQFVGSNDQLFIH) lie on the Extracellular side of the membrane. The chain crosses the membrane as a helical span at residues 214 to 234 (IVKVALLVIAILAVIVGVIFI). Over 235–261 (QQAVRKIAIQYAKGTGRSPAGGGQSTH) the chain is Cytoplasmic. Residues 262–282 (LPLKVNPAGVIPVIFAVAFLI) form a helical membrane-spanning segment. Over 283 to 308 (TPRTIASFFGTNDVTKWIQNNFDNTH) the chain is Extracellular. The chain crosses the membrane as a helical span at residues 309–329 (PVGMAIYVALIIAFTYFYAFV). The Cytoplasmic segment spans residues 330 to 368 (QVNPEQMADNLKKQGGYIPGVRPGKMTQDRITSILYRLT). The next 2 membrane-spanning stretches (helical) occupy residues 369–389 (FVGSIFLAVISILPIFFIQFA) and 390–410 (GLPQSAQIGGTSLLIVVGVAL). Residues 411–431 (ETMKQLESQLVKRNYRGFMKN) lie on the Cytoplasmic side of the membrane.

The protein belongs to the SecY/SEC61-alpha family. Component of the Sec protein translocase complex. Heterotrimer consisting of SecY, SecE and SecG subunits. The heterotrimers can form oligomers, although 1 heterotrimer is thought to be able to translocate proteins. Interacts with the ribosome. Interacts with SecDF, and other proteins may be involved. Interacts with SecA. Interacts with FloT.

The protein localises to the cell membrane. It is found in the membrane raft. Functionally, the central subunit of the protein translocation channel SecYEG. Consists of two halves formed by TMs 1-5 and 6-10. These two domains form a lateral gate at the front which open onto the bilayer between TMs 2 and 7, and are clamped together by SecE at the back. The channel is closed by both a pore ring composed of hydrophobic SecY resides and a short helix (helix 2A) on the extracellular side of the membrane which forms a plug. The plug probably moves laterally to allow the channel to open. The ring and the pore may move independently. This chain is Protein translocase subunit SecY, found in Bacillus subtilis (strain 168).